Consider the following 410-residue polypeptide: Lysosome-associated membrane glycoprotein 2 (410 aa).

The N-terminal stretch at 1–28 (MMCFRLSPVSGSGLVLSCLLLGAVQSYA) is a signal peptide. The interval 29 to 192 (FELNLPDSKA…SKEEFVCEED (164 aa)) is first lumenal domain. Over 29–375 (FELNLPDSKA…QDCSADEDNF (347 aa)) the chain is Lumenal. An intrachain disulfide couples cysteine 40 to cysteine 79. 17 N-linked (GlcNAc...) asparagine glycosylation sites follow: asparagine 48, asparagine 58, asparagine 71, asparagine 75, asparagine 99, asparagine 119, asparagine 123, asparagine 179, asparagine 222, asparagine 229, asparagine 242, asparagine 260, asparagine 275, asparagine 300, asparagine 307, asparagine 317, and asparagine 356. A disulfide bridge connects residues cysteine 153 and cysteine 189. Residues 193-228 (KSVTTVRPIIHTTVPPPTTTPTPLPPKVGNYSVSNG) form a hinge region. Residues 229–375 (NATCLLATMG…QDCSADEDNF (147 aa)) form a second lumenal domain region. The cysteines at positions 232 and 265 are disulfide-linked. Cysteine 331 and cysteine 368 are oxidised to a cystine. Residues 376-399 (LVPIAVGAALAGVLALVLLAYFIG) form a helical membrane-spanning segment. The Cytoplasmic segment spans residues 400–410 (LKRHHTGYEQF). The important for binding and subsequent lysosomal degradation of target proteins stretch occupies residues 401–404 (KRHH).

Belongs to the LAMP family. Monomer. Forms large homooligomers. Interacts (via its cytoplasmic region) with HSPA8; HSPA8 mediates recruitment of proteins with a KFERQ motif to the surface of the lysosome for chaperone-mediated autophagy. Interacts with HSP90 in the lysosome lumen; this enhances LAMP2 stability. Interacts with MLLT11. Interacts with ABCB9. Interacts with FURIN. Interacts with CT55; this interaction may be important for LAMP2 protein stability. Interacts with TMEM175; inhibiting the proton channel activity of TMEM175. Forms a ternary complex with RAB7A and RUFY4 (via RUN domain); the interaction with RAB7A is mediated by RUFY4 (via RUN and coiled coil domains). Post-translationally, extensively N-glycosylated. Contains a minor proportion of O-linked glycans.

The protein localises to the lysosome membrane. It localises to the endosome membrane. Its subcellular location is the cell membrane. It is found in the cytoplasmic vesicle. The protein resides in the autophagosome membrane. Functionally, lysosomal membrane glycoprotein which plays an important role in lysosome biogenesis, lysosomal pH regulation and autophagy. Acts as an important regulator of lysosomal lumen pH regulation by acting as a direct inhibitor of the proton channel TMEM175, facilitating lysosomal acidification for optimal hydrolase activity. Plays an important role in chaperone-mediated autophagy, a process that mediates lysosomal degradation of proteins in response to various stresses and as part of the normal turnover of proteins with a long biological half-live. Functions by binding target proteins, such as GAPDH, NLRP3 and MLLT11, and targeting them for lysosomal degradation. In the chaperone-mediated autophagy, acts downstream of chaperones, such as HSPA8/HSC70, which recognize and bind substrate proteins and mediate their recruitment to lysosomes, where target proteins bind LAMP2. Plays a role in lysosomal protein degradation in response to starvation. Required for the fusion of autophagosomes with lysosomes during autophagy. Cells that lack LAMP2 express normal levels of VAMP8, but fail to accumulate STX17 on autophagosomes, which is the most likely explanation for the lack of fusion between autophagosomes and lysosomes. Required for normal degradation of the contents of autophagosomes. Required for efficient MHC class II-mediated presentation of exogenous antigens via its function in lysosomal protein degradation; antigenic peptides generated by proteases in the endosomal/lysosomal compartment are captured by nascent MHC II subunits. Is not required for efficient MHC class II-mediated presentation of endogenous antigens. The chain is Lysosome-associated membrane glycoprotein 2 (LAMP2) from Cricetulus griseus (Chinese hamster).